Here is a 356-residue protein sequence, read N- to C-terminus: UDP-N-acetylglucosamine--N-acetylmuramyl-(pentapeptide) pyrophosphoryl-undecaprenol N-acetylglucosamine transferase (356 aa).

3 residues coordinate UDP-N-acetyl-alpha-D-glucosamine: Arg166, Ser196, and Gln290.

Belongs to the glycosyltransferase 28 family. MurG subfamily.

It is found in the cell membrane. The catalysed reaction is Mur2Ac(oyl-L-Ala-gamma-D-Glu-L-Lys-D-Ala-D-Ala)-di-trans,octa-cis-undecaprenyl diphosphate + UDP-N-acetyl-alpha-D-glucosamine = beta-D-GlcNAc-(1-&gt;4)-Mur2Ac(oyl-L-Ala-gamma-D-Glu-L-Lys-D-Ala-D-Ala)-di-trans,octa-cis-undecaprenyl diphosphate + UDP + H(+). Its pathway is cell wall biogenesis; peptidoglycan biosynthesis. Its function is as follows. Cell wall formation. Catalyzes the transfer of a GlcNAc subunit on undecaprenyl-pyrophosphoryl-MurNAc-pentapeptide (lipid intermediate I) to form undecaprenyl-pyrophosphoryl-MurNAc-(pentapeptide)GlcNAc (lipid intermediate II). This chain is UDP-N-acetylglucosamine--N-acetylmuramyl-(pentapeptide) pyrophosphoryl-undecaprenol N-acetylglucosamine transferase, found in Staphylococcus aureus (strain Mu3 / ATCC 700698).